The chain runs to 188 residues: Zinc finger protein 428 (188 aa).

A disordered region spans residues 1–162 (MTETREPAET…EEEEEEGTYH (162 aa)). The span at 40–61 (PDSEEEEDEEEEEEETTDDPEY) shows a compositional bias: acidic residues. The span at 84–94 (RAAQPPAQPCQ) shows a compositional bias: low complexity. The residue at position 108 (Thr108) is a Phosphothreonine. Over residues 116–129 (PATAPQEAPAPEGR) the composition is skewed to low complexity. Basic and acidic residues predominate over residues 138-149 (PPRAGEGRPAGR). A C2H2-type zinc finger spans residues 161–183 (YHCTECEDSFDNLGELHGHFMLH).

This chain is Zinc finger protein 428 (ZNF428), found in Homo sapiens (Human).